Reading from the N-terminus, the 23-residue chain is Acidic phospholipase CHA-E6a (23 aa).

The protein belongs to the phospholipase A2 family. Group II subfamily. D49 sub-subfamily. It depends on Ca(2+) as a cofactor. In terms of processing, contains 7 disulfide bonds. As to expression, expressed by the venom gland.

It is found in the secreted. The enzyme catalyses a 1,2-diacyl-sn-glycero-3-phosphocholine + H2O = a 1-acyl-sn-glycero-3-phosphocholine + a fatty acid + H(+). Its function is as follows. Snake venom phospholipase A2 (PLA2) that shows high lipolytic (1048 umol/mg/min) and weak ADP-induced platelet aggregation activities. Also shows weak anticoagulant activity (IC(50) is less than 1.0 uM). PLA2 catalyzes the calcium-dependent hydrolysis of the 2-acyl groups in 3-sn-phosphoglycerides. The protein is Acidic phospholipase CHA-E6a of Crotalus horridus (Timber rattlesnake).